Here is a 312-residue protein sequence, read N- to C-terminus: Olfactory receptor 52A1 (312 aa).

The Extracellular portion of the chain corresponds to 1-27; it reads MSISNITVYMPSVLTLVGIPGLESVQC. The N-linked (GlcNAc...) asparagine glycan is linked to Asn-5. Residues 28–48 form a helical membrane-spanning segment; that stretch reads WIGIPFCAIYLIAMIGNSLLL. At 49 to 56 the chain is on the cytoplasmic side; the sequence is SIIKSERS. A helical membrane pass occupies residues 57–77; the sequence is LHEPLYIFLGMLGATDIALAS. The Extracellular portion of the chain corresponds to 78–101; it reads SIMPKMLGIFWFNVPEIYFDSCLL. Cys-99 and Cys-182 form a disulfide bridge. Residues 102-122 form a helical membrane-spanning segment; that stretch reads QMWFIHTLQGIESGILVAMAL. Over 123–141 the chain is Cytoplasmic; that stretch reads DRYVAICYPLRHANIFTHQ. Residues 142–162 form a helical membrane-spanning segment; it reads LVIQIGTMVVLRAAILVAPCL. Residues 163–199 are Extracellular-facing; that stretch reads VLIKCRFQFYHTTVISHSYCEHMAIVKLAAANVQVNK. A helical membrane pass occupies residues 200 to 220; sequence IYGLFVAFTVAGFDLTFITLS. Residues 221 to 240 lie on the Cytoplasmic side of the membrane; that stretch reads YIQIFITVFRLPQKEARFKA. The chain crosses the membrane as a helical span at residues 241-261; it reads FNTCIAHICVFLQFYLLAFFS. Residues 262 to 276 are Extracellular-facing; sequence FFTHRFGSHISPYIH. Residues 277-297 traverse the membrane as a helical segment; the sequence is ILFSSIYLLVPPFLNPLVYGA. The Cytoplasmic portion of the chain corresponds to 298–312; sequence KTTQIRIHVVKMFCS.

It belongs to the G-protein coupled receptor 1 family.

The protein localises to the cell membrane. Its function is as follows. Odorant receptor. This Homo sapiens (Human) protein is Olfactory receptor 52A1 (OR52A1).